The sequence spans 224 residues: Putative adhesin A1G_07050 (224 aa).

Positions 1–22 (MKKLLLIAATSATILSSSVSFA) are cleaved as a signal peptide.

This is Putative adhesin A1G_07050 from Rickettsia rickettsii (strain Sheila Smith).